A 229-amino-acid polypeptide reads, in one-letter code: 2-C-methyl-D-erythritol 4-phosphate cytidylyltransferase (229 aa).

This sequence belongs to the IspD/TarI cytidylyltransferase family. IspD subfamily.

It carries out the reaction 2-C-methyl-D-erythritol 4-phosphate + CTP + H(+) = 4-CDP-2-C-methyl-D-erythritol + diphosphate. Its pathway is isoprenoid biosynthesis; isopentenyl diphosphate biosynthesis via DXP pathway; isopentenyl diphosphate from 1-deoxy-D-xylulose 5-phosphate: step 2/6. Functionally, catalyzes the formation of 4-diphosphocytidyl-2-C-methyl-D-erythritol from CTP and 2-C-methyl-D-erythritol 4-phosphate (MEP). The chain is 2-C-methyl-D-erythritol 4-phosphate cytidylyltransferase from Clostridium acetobutylicum (strain ATCC 824 / DSM 792 / JCM 1419 / IAM 19013 / LMG 5710 / NBRC 13948 / NRRL B-527 / VKM B-1787 / 2291 / W).